The sequence spans 285 residues: Phospholipid phosphatase 1 (285 aa).

At 1–6 (MFDKTR) the chain is on the cytoplasmic side. Positions 5–7 (TRL) match the PDZ-binding; involved in localization to the apical cell membrane motif. Residues 7-27 (LPYVALDVLCVLLAGLPFAIL) traverse the membrane as a helical segment. Residues 28-53 (TSRHTPFQRGLFCNDESIKYPYKEDT) lie on the Extracellular side of the membrane. Residues 54–74 (IPYPLLGGIIIPFSIIVMIVG) traverse the membrane as a helical segment. Over 75–94 (ETLSVYFNLLHSNSFIRNNY) the chain is Cytoplasmic. A helical membrane pass occupies residues 95 to 115 (IATIYKAIGTFLFGAAASQSL). The Extracellular portion of the chain corresponds to 116 to 164 (TDIAKYSIGRLRPHFLDVCDPDWSKINCSDGYIENYICRGNAQKVKEGR). The phosphatase sequence motif I stretch occupies residues 120–128 (KYSIGRLRP). Residue Asn-142 is glycosylated (N-linked (GlcNAc...) asparagine). Residues 165-185 (LSFYSGHSSFSMYCMLFVALY) traverse the membrane as a helical segment. The tract at residues 168 to 171 (YSGH) is phosphatase sequence motif II. The active-site Proton donors is His-171. The Cytoplasmic segment spans residues 186-196 (LQARMKGDWAR). A helical membrane pass occupies residues 197–216 (LLRPTLQFGLVAVSIYVGLS). Residues 216 to 227 (SRVSDYKHHWSD) are phosphatase sequence motif III. Residues 217–229 (RVSDYKHHWSDVL) are Extracellular-facing. His-223 functions as the Nucleophile in the catalytic mechanism. Residues 230–250 (TGLIQGALVAIVVAVYVSDFF) traverse the membrane as a helical segment. The Cytoplasmic segment spans residues 251-285 (KERNSPFKERKEEDSHTTLHETPTTGNHYRNSHQP). Positions 257–269 (FKERKEEDSHTTL) are enriched in basic and acidic residues. The tract at residues 257–285 (FKERKEEDSHTTLHETPTTGNHYRNSHQP) is disordered. Residues 270 to 285 (HETPTTGNHYRNSHQP) are compositionally biased toward polar residues.

It belongs to the PA-phosphatase related phosphoesterase family. As to quaternary structure, forms functional homodimers and homooligomers that are not required for substrate recognition and catalytic activity. Can also form heterooligomers with PLPP2 and PLPP3. Post-translationally, N-glycosylated. N-linked sugars are of the complex type. N-glycosylation is not required for the phosphatase activity.

The protein localises to the cell membrane. It is found in the apical cell membrane. It localises to the membrane raft. Its subcellular location is the membrane. The protein resides in the caveola. It carries out the reaction a 1,2-diacyl-sn-glycero-3-phosphate + H2O = a 1,2-diacyl-sn-glycerol + phosphate. The catalysed reaction is 1,2-dihexadecanoyl-sn-glycero-3-phosphate + H2O = 1,2-dihexadecanoyl-sn-glycerol + phosphate. It catalyses the reaction 1,2-di-(9Z-octadecenoyl)-sn-glycero-3-phosphate + H2O = 1,2-di-(9Z-octadecenoyl)-sn-glycerol + phosphate. The enzyme catalyses a monoacyl-sn-glycero-3-phosphate + H2O = a monoacylglycerol + phosphate. It carries out the reaction (9Z)-octadecenoyl-sn-glycero-3-phosphate + H2O = (9Z-octadecenoyl)-glycerol + phosphate. The catalysed reaction is a 1-acyl-sn-glycero-3-phosphate + H2O = a 1-acyl-sn-glycerol + phosphate. It catalyses the reaction 1-(9Z-octadecenoyl)-sn-glycero-3-phosphate + H2O = 1-(9Z-octadecenoyl)-sn-glycerol + phosphate. The enzyme catalyses a 1,2-diacyl-sn-glycerol 3-diphosphate + H2O = a 1,2-diacyl-sn-glycero-3-phosphate + phosphate + H(+). It carries out the reaction sphing-4-enine 1-phosphate + H2O = sphing-4-enine + phosphate. The catalysed reaction is an N-acylsphing-4-enine 1-phosphate + H2O = an N-acylsphing-4-enine + phosphate. It catalyses the reaction N-(octanoyl)-sphing-4-enine-1-phosphate + H2O = N-octanoylsphing-4-enine + phosphate. The enzyme catalyses N-(9Z-octadecenoyl)-ethanolamine phosphate + H2O = N-(9Z-octadecenoyl) ethanolamine + phosphate. It carries out the reaction 1-hexadecanoyl-2-(9Z-octadecenoyl)-sn-glycero-3-phosphate + H2O = 1-hexadecanoyl-2-(9Z-octadecenoyl)-sn-glycerol + phosphate. Its pathway is lipid metabolism; phospholipid metabolism. With respect to regulation, magnesium-independent phospholipid phosphatase. Insensitive to N-ethylmaleimide. Magnesium-independent phospholipid phosphatase of the plasma membrane that catalyzes the dephosphorylation of a variety of glycerolipid and sphingolipid phosphate esters including phosphatidate/PA, lysophosphatidate/LPA, diacylglycerol pyrophosphate/DGPP, sphingosine 1-phosphate/S1P and ceramide 1-phosphate/C1P. Also acts on N-oleoyl ethanolamine phosphate/N-(9Z-octadecenoyl)-ethanolamine phosphate, a potential physiological compound. Through its extracellular phosphatase activity allows both the hydrolysis and the cellular uptake of these bioactive lipid mediators from the milieu, regulating signal transduction in different cellular processes. It is for instance essential for the extracellular hydrolysis of S1P and subsequent conversion into intracellular S1P. Involved in the regulation of inflammation, platelets activation, cell proliferation and migration among other processes. May also have an intracellular activity to regulate phospholipid-mediated signaling pathways. This chain is Phospholipid phosphatase 1, found in Sus scrofa (Pig).